We begin with the raw amino-acid sequence, 89 residues long: MSKKCALTGRKPRRGYSYAIRGISKKKKGIGLKVTGRTKRRFFPNMMTKRLWSTEENRFLKLKISAAALRLVDKLGLDQVVARAKSKGF.

Belongs to the bacterial ribosomal protein bL28 family.

This chain is Large ribosomal subunit protein bL28, found in Chlamydia trachomatis serovar L2 (strain ATCC VR-902B / DSM 19102 / 434/Bu).